The sequence spans 197 residues: Holliday junction branch migration complex subunit RuvA (197 aa).

Positions 1–63 (MFDYIKGQLT…EDAHLLFGFH (63 aa)) are domain I. The interval 64-142 (TENEKDVFLK…TIPEGGQAQQ (79 aa)) is domain II. The interval 142 to 146 (QMPKA) is flexible linker. The tract at residues 147–197 (KGNQQLDEAIEALLALGYKATELKKIRAFFEGTDDTAEQYIKSALKMLMKG) is domain III.

It belongs to the RuvA family. In terms of assembly, homotetramer. Forms an RuvA(8)-RuvB(12)-Holliday junction (HJ) complex. HJ DNA is sandwiched between 2 RuvA tetramers; dsDNA enters through RuvA and exits via RuvB. An RuvB hexamer assembles on each DNA strand where it exits the tetramer. Each RuvB hexamer is contacted by two RuvA subunits (via domain III) on 2 adjacent RuvB subunits; this complex drives branch migration. In the full resolvosome a probable DNA-RuvA(4)-RuvB(12)-RuvC(2) complex forms which resolves the HJ.

The protein resides in the cytoplasm. In terms of biological role, the RuvA-RuvB-RuvC complex processes Holliday junction (HJ) DNA during genetic recombination and DNA repair, while the RuvA-RuvB complex plays an important role in the rescue of blocked DNA replication forks via replication fork reversal (RFR). RuvA specifically binds to HJ cruciform DNA, conferring on it an open structure. The RuvB hexamer acts as an ATP-dependent pump, pulling dsDNA into and through the RuvAB complex. HJ branch migration allows RuvC to scan DNA until it finds its consensus sequence, where it cleaves and resolves the cruciform DNA. The polypeptide is Holliday junction branch migration complex subunit RuvA (Streptococcus uberis (strain ATCC BAA-854 / 0140J)).